The following is a 53-amino-acid chain: Membrane antigen containing repeating peptides (53 aa).

6 tandem repeats follow at residues 1-10, 11-20, 21-30, 31-40, 41-50, and 51-53. The tract at residues 1–53 is 6 X 10 AA tandem repeats; the sequence is EAEEAARLQAEAEEAARQQAEAEEAARLQAEAEEAARLQAEAEEAARLQAEAE. The tract at residues 1–53 is disordered; sequence EAEEAARLQAEAEEAARQQAEAEEAARLQAEAEEAARLQAEAEEAARLQAEAE.

Its subcellular location is the membrane. The sequence is that of Membrane antigen containing repeating peptides from Leishmania major.